Reading from the N-terminus, the 718-residue chain is Methionine--tRNA ligase (718 aa).

The 'HIGH' region signature appears at 12–22 (PYANGDIHLGH). Zn(2+)-binding residues include Cys143, Cys146, Cys156, and Cys159. The short motif at 349–353 (KMSKS) is the 'KMSKS' region element. Position 352 (Lys352) interacts with ATP. The disordered stretch occupies residues 573-599 (AAPAAKVASSQQRHAEKQQHEAQSAET). Positions 608 to 718 (DFTKVDLRIA…TGAASGMRVK (111 aa)) constitute a tRNA-binding domain.

The protein belongs to the class-I aminoacyl-tRNA synthetase family. MetG type 1 subfamily. In terms of assembly, homodimer. Zn(2+) is required as a cofactor.

It localises to the cytoplasm. The enzyme catalyses tRNA(Met) + L-methionine + ATP = L-methionyl-tRNA(Met) + AMP + diphosphate. Its function is as follows. Is required not only for elongation of protein synthesis but also for the initiation of all mRNA translation through initiator tRNA(fMet) aminoacylation. This chain is Methionine--tRNA ligase, found in Aromatoleum aromaticum (strain DSM 19018 / LMG 30748 / EbN1) (Azoarcus sp. (strain EbN1)).